Reading from the N-terminus, the 91-residue chain is Proline, histidine and glycine-rich protein 1 (91 aa).

The disordered stretch occupies residues 1–91 (MHPGGKGHCG…HCGPHPGPHH (91 aa)). Composition is skewed to gly residues over residues 33-42 (HPGHGPGHCP), 49-63 (GHGG…GHCP), and 70-82 (GHGG…GPGH).

The protein is Proline, histidine and glycine-rich protein 1 (Phgr1) of Mus musculus (Mouse).